The sequence spans 239 residues: MAKPCGVRLSGEARKQVDVFRQNLFQEADDFLCTFLPRKIISLSQLLQEDSLNVADLSSLRAPLDIPIPDPPPKDDEMETDKQEKKEVPKCGYLPGNEKLLALLALVKPEVWTLKEKCILVITWIQHLIPKIEDGNDFGVAIQEKVLERVNAVKTKVEAFQTTISKYFSERGDAVAKASKDTHVMDYRALVHERDEAAYGALRAMVLDLRAFYAELYHIISSNLEKIVNPKGEEKPSMY.

At Ala2 the chain carries N-acetylalanine. Ser10 is subject to Phosphoserine. Residues 65–87 (DIPIPDPPPKDDEMETDKQEKKE) form a disordered region. Residues 72-87 (PPKDDEMETDKQEKKE) show a composition bias toward basic and acidic residues.

Belongs to the PA28 family. In terms of assembly, heterodimer of PSME1 and PSME2, which forms a hexameric ring.

Implicated in immunoproteasome assembly and required for efficient antigen processing. The PA28 activator complex enhances the generation of class I binding peptides by altering the cleavage pattern of the proteasome. The sequence is that of Proteasome activator complex subunit 2 (Psme2) from Mus musculus (Mouse).